The primary structure comprises 378 residues: Chaperone protein DnaJ (378 aa).

One can recognise a J domain in the interval 5–70 (DYYEVLGVAK…QKRAAYDQYG (66 aa)). Residues 138–216 (GYDTQIRVPS…CHGSGKVKET (79 aa)) form a CR-type zinc finger. 8 residues coordinate Zn(2+): Cys-151, Cys-154, Cys-168, Cys-171, Cys-190, Cys-193, Cys-204, and Cys-207. CXXCXGXG motif repeat units follow at residues 151–158 (CEVCHGSG), 168–175 (CPTCHGQG), 190–197 (CPKCHGTG), and 204–211 (CAHCHGSG).

Belongs to the DnaJ family. In terms of assembly, homodimer. It depends on Zn(2+) as a cofactor.

It is found in the cytoplasm. Functionally, participates actively in the response to hyperosmotic and heat shock by preventing the aggregation of stress-denatured proteins and by disaggregating proteins, also in an autonomous, DnaK-independent fashion. Unfolded proteins bind initially to DnaJ; upon interaction with the DnaJ-bound protein, DnaK hydrolyzes its bound ATP, resulting in the formation of a stable complex. GrpE releases ADP from DnaK; ATP binding to DnaK triggers the release of the substrate protein, thus completing the reaction cycle. Several rounds of ATP-dependent interactions between DnaJ, DnaK and GrpE are required for fully efficient folding. Also involved, together with DnaK and GrpE, in the DNA replication of plasmids through activation of initiation proteins. This Burkholderia cenocepacia (strain HI2424) protein is Chaperone protein DnaJ.